The chain runs to 334 residues: AT-hook motif nuclear-localized protein 2 (334 aa).

The segment covering 1–21 (METTGEVVKTTTGSDGGVTVV) has biased composition (low complexity). Disordered stretches follow at residues 1 to 103 (METT…PTTS) and 109 to 128 (STTS…PSSF). Over residues 44 to 54 (SVAPPPPPPPQ) the composition is skewed to pro residues. Over residues 71-80 (IKKRRGRPRK) the composition is skewed to basic residues. Positions 72–80 (KKRRGRPRK) match the Bipartite nuclear localization signal motif. Residues 72–84 (KKRRGRPRKYGHD) constitute a DNA-binding region (a.T hook). The segment covering 90–103 (LSPNPISSAAPTTS) has biased composition (polar residues). The PPC domain maps to 147-287 (AANFTPHIIT…PHNHNFMSSP (141 aa)). Positions 306–319 (SSLPISTWTPSFPS) are enriched in polar residues. The segment at 306–334 (SSLPISTWTPSFPSDSRHKHSHDFNITLT) is disordered.

It is found in the nucleus. Its function is as follows. Transcription factor that specifically binds AT-rich DNA sequences related to the nuclear matrix attachment regions (MARs). The polypeptide is AT-hook motif nuclear-localized protein 2 (Arabidopsis thaliana (Mouse-ear cress)).